Here is a 1417-residue protein sequence, read N- to C-terminus: Cytoadherence-linked asexual protein 3.1 (1417 aa).

The signal sequence occupies residues 1 to 24; sequence MVSFFKTPIFILIIFLYLNEKVIC. Cystine bridges form between cysteine 333/cysteine 361, cysteine 407/cysteine 413, cysteine 517/cysteine 545, and cysteine 521/cysteine 542. Residues 1204-1224 traverse the membrane as a helical segment; it reads LANGFMYAFCFFAISQMYAYF. Residues 1383-1417 form a disordered region; it reads TYIDTEKMNEADSADSDDEKDSDTPDDELMISRFH. Acidic residues predominate over residues 1394-1411; it reads DSADSDDEKDSDTPDDEL.

Self-associates. Component of the RhopH complex. RhopH complex is at least composed of CLAG3.1/CLAG3.2, RhopH2 and RhopH3 with a 1:1:1 subunit stoichiometry. CLAG3.1/CLAG3.2 mediates subunit association through independent contacts with RhopH2 and RhopH3, which do not directly interact with one another. Interacts with RhopH2. Interacts with RhopH3.

The protein localises to the host cell membrane. The protein resides in the host cytoplasm. It localises to the cytoplasmic vesicle. It is found in the secretory vesicle. Its subcellular location is the rhoptry. In terms of biological role, participates in the formation of new permeability pathways in Plasmodium-infected erythrocytes enabling the uptake of nutrients from the blood plasma. This chain is Cytoadherence-linked asexual protein 3.1, found in Plasmodium falciparum.